The sequence spans 212 residues: Photosynthetic NDH subunit of subcomplex B 5, chloroplastic (212 aa).

Residues 1–48 constitute a chloroplast transit peptide; the sequence is MATVTILSPKSIPKVTDSKFGARVSDQIVNVVKCGKSGRRLKLAKLVS. The next 2 membrane-spanning stretches (helical) occupy residues 115 to 135 and 136 to 156; these read FQGLISCMFLPAIALGMYFDA and PGEYLFIGAALFTVVFCIIEM.

In terms of assembly, part of the chloroplast NDH complex, composed of a mixture of chloroplast and nucleus encoded subunits. Component of the NDH subcomplex B, at least composed of PnsB1, PnsB2, PnsB3, PnsB4 and PnsB5.

The protein resides in the plastid. It localises to the chloroplast membrane. In terms of biological role, NDH shuttles electrons from NAD(P)H:plastoquinone, via FMN and iron-sulfur (Fe-S) centers, to quinones in the photosynthetic chain and possibly in a chloroplast respiratory chain. The immediate electron acceptor for the enzyme in this species is believed to be plastoquinone. Couples the redox reaction to proton translocation, and thus conserves the redox energy in a proton gradient. This is Photosynthetic NDH subunit of subcomplex B 5, chloroplastic from Arabidopsis thaliana (Mouse-ear cress).